The chain runs to 383 residues: ATP phosphoribosyltransferase regulatory subunit (383 aa).

This sequence belongs to the class-II aminoacyl-tRNA synthetase family. HisZ subfamily. As to quaternary structure, heteromultimer composed of HisG and HisZ subunits.

It localises to the cytoplasm. It participates in amino-acid biosynthesis; L-histidine biosynthesis; L-histidine from 5-phospho-alpha-D-ribose 1-diphosphate: step 1/9. Required for the first step of histidine biosynthesis. May allow the feedback regulation of ATP phosphoribosyltransferase activity by histidine. The sequence is that of ATP phosphoribosyltransferase regulatory subunit from Neisseria meningitidis serogroup C (strain 053442).